Reading from the N-terminus, the 415-residue chain is Gamma-glutamyl phosphate reductase (415 aa).

The protein belongs to the gamma-glutamyl phosphate reductase family.

It localises to the cytoplasm. It catalyses the reaction L-glutamate 5-semialdehyde + phosphate + NADP(+) = L-glutamyl 5-phosphate + NADPH + H(+). The protein operates within amino-acid biosynthesis; L-proline biosynthesis; L-glutamate 5-semialdehyde from L-glutamate: step 2/2. Catalyzes the NADPH-dependent reduction of L-glutamate 5-phosphate into L-glutamate 5-semialdehyde and phosphate. The product spontaneously undergoes cyclization to form 1-pyrroline-5-carboxylate. In Shouchella clausii (strain KSM-K16) (Alkalihalobacillus clausii), this protein is Gamma-glutamyl phosphate reductase.